The chain runs to 898 residues: MSEHDKDLPLRADLACLDRLLSEVVGEQEGAVVSGAVQAIALRRGDERSHPLPQLAPEAAASLLRACGLYAQLFNIAEDLHHNRRRRAHQLAGSAPQQGSLPRALQRLRQDGVSFHALHQLLSHAKVGAILTAHPTEVQRQSVLDGHRAVRRFLSQLNAADLTPEEREALEAKLKRAILALWQTSEIRHFKMTVRDEITNGVAYHPLAFFEALPALYRRLEREIGQLWGEEARLPSFIRVGSWIGGDRDGNPNVDAGLLRHAVTRQSQQAFEYYLQELKSLYRELSLSSRLVEAGAEVLALAEQSPDQAVSRGEEPYRRALATMQGKLRATARLRGVELACRWDERAPYRDHRELIQDLASLSASLRAHGSALLADGRLSRLIRSVDVFGFFLMPLDLRQHAAVHEGVVAELFSAAGLEEYRALDEAARVRVLIRELATPRLLFSPYLRYGEQAEKELAIFREAAAIQRDFGVEAIGQCIISNCASVSDILALALLCKEAGLIRLEDGQPRASVNLVPLFETIADLENSEAVMRALFALPWYKQLLDSRERVQEVMLGYSDSNKDGGYLTSQWQLWQAETRLVKVFADAGARLQLFHGRGGSVGRGGGPSYEAIVAQPAGSVAGRIRITEQGEVITAKYSDPAIAGRNLEALVAATLEASLGNIPGGEVDTALFDELSASAFAAYRALVETPGFMQYFLEATPVTAIARLNIGSRPASRKSLSSIGDLRAIPWVFSWSQSRLMLPGWFGVGSAVAAYVQKHGDAGLAKLQHLYRHSPFFQVMLSNMEQVLAKADLGIARRFSELVADRELAARLFGAIEAEWRKTHDAFFAITGQAELLEGNPTLRRSLETRLPFLDALGLLQADLLARLRAEPDDEDTLYAIHLTINGTSAGLRNTG.

Catalysis depends on residues His-134 and Lys-564.

The protein belongs to the PEPCase type 1 family. Mg(2+) is required as a cofactor.

The catalysed reaction is oxaloacetate + phosphate = phosphoenolpyruvate + hydrogencarbonate. In terms of biological role, forms oxaloacetate, a four-carbon dicarboxylic acid source for the tricarboxylic acid cycle. The protein is Phosphoenolpyruvate carboxylase of Chromobacterium violaceum (strain ATCC 12472 / DSM 30191 / JCM 1249 / CCUG 213 / NBRC 12614 / NCIMB 9131 / NCTC 9757 / MK).